An 841-amino-acid chain; its full sequence is Serine/threonine-protein kinase/endoribonuclease IRE1a (841 aa).

The N-terminal stretch at 1–30 (MPPRCPFLRHLFFLLLLLSPWIMSPCGGAA) is a signal peptide. At 31–323 (DDVTYPIVPS…KQKYTYLFGQ (293 aa)) the chain is on the lumenal side. N-linked (GlcNAc...) asparagine glycosylation is found at N100, N104, N119, N132, and N221. The helical transmembrane segment at 324 to 344 (WSPVKLLAPLVLLGVVVSVFI) threads the bilayer. Over 345-841 (KKFSSRGSDV…FRKYFKCDII (497 aa)) the chain is Cytoplasmic. Positions 352–382 (SDVSLKAGPSKKKKNRKSAKDTNRQSVPRGQ) are disordered. One can recognise a Protein kinase domain in the interval 414 to 704 (FLSSKEIAKG…ATEVLLHPMF (291 aa)). ATP contacts are provided by residues 420-428 (IAKGSNGTV) and K442. D570 acts as the Proton acceptor in catalysis. Residues 707–838 (SEMRLSFLRD…EEVFRKYFKC (132 aa)) form the KEN domain.

This sequence belongs to the protein kinase superfamily. Ser/Thr protein kinase family. Homodimer; disulfide-linked. Dimer formation is driven by hydrophobic interactions within the N-terminal luminal domains and stabilized by disulfide bridges. Mg(2+) serves as cofactor. Autophosphorylated. In terms of tissue distribution, ubiquitous. Detected in the vascular bundles of young plants, leaves, roots, seedlings and in the receptacles of flowers and vascular bundles of the petals.

The protein resides in the endoplasmic reticulum membrane. The catalysed reaction is L-seryl-[protein] + ATP = O-phospho-L-seryl-[protein] + ADP + H(+). It catalyses the reaction L-threonyl-[protein] + ATP = O-phospho-L-threonyl-[protein] + ADP + H(+). With respect to regulation, the kinase domain is activated by trans-autophosphorylation. Kinase activity is required for activation of the endoribonuclease domain. Senses unfolded proteins in the lumen of the endoplasmic reticulum via its N-terminal domain which leads to enzyme auto-activation. The active endoribonuclease domain splices bZIP60 mRNA to generate a new C-terminus, converting it into a potent unfolded-protein response transcriptional activator which then induces transcription of UPR target genes. Involved in organ growth regulation. Plays a role in plant immunity and abiotic stress responses. This Arabidopsis thaliana (Mouse-ear cress) protein is Serine/threonine-protein kinase/endoribonuclease IRE1a (IRE1A).